A 422-amino-acid chain; its full sequence is 5'-deoxyadenosine deaminase (422 aa).

The Zn(2+) site is built by His57 and His59. Glu86 and His178 together coordinate substrate. His205 serves as a coordination point for Zn(2+). Substrate-binding residues include Glu208 and Asp294. A Zn(2+)-binding site is contributed by Asp294.

Belongs to the metallo-dependent hydrolases superfamily. MTA/SAH deaminase family. As to quaternary structure, homotetramer. Zn(2+) is required as a cofactor.

The enzyme catalyses 5'-deoxyadenosine + H2O + H(+) = 5'-deoxyinosine + NH4(+). It catalyses the reaction S-adenosyl-L-homocysteine + H2O + H(+) = S-inosyl-L-homocysteine + NH4(+). The catalysed reaction is S-methyl-5'-thioadenosine + H2O + H(+) = S-methyl-5'-thioinosine + NH4(+). It carries out the reaction adenosine + H2O + H(+) = inosine + NH4(+). It functions in the pathway amino-acid biosynthesis; S-adenosyl-L-methionine biosynthesis. In terms of biological role, catalyzes the deamination of three SAM-derived enzymatic products, namely 5'-deoxyadenosine, S-adenosyl-L-homocysteine, and 5'-methylthioadenosine, to produce the inosine analogs. Can also deaminate adenosine. The preferred substrate for this enzyme is 5'-deoxyadenosine, but all these substrates are efficiently deaminated. Likely functions in a S-adenosyl-L-methionine (SAM) recycling pathway from S-adenosyl-L-homocysteine (SAH) produced from SAM-dependent methylation reactions. May also be involved in the recycling of 5'-deoxyadenosine, whereupon the 5'-deoxyribose moiety of 5'-deoxyinosine is further metabolized to deoxyhexoses used for the biosynthesis of aromatic amino acids in methanogens. The sequence is that of 5'-deoxyadenosine deaminase from Methanococcus maripaludis (strain C7 / ATCC BAA-1331).